We begin with the raw amino-acid sequence, 113 residues long: Hydrogenase maturation factor HypA (113 aa).

His2 provides a ligand contact to Ni(2+). Zn(2+)-binding residues include Cys73, Cys76, Cys89, and Cys92.

The protein belongs to the HypA/HybF family.

Involved in the maturation of [NiFe] hydrogenases. Required for nickel insertion into the metal center of the hydrogenase. This Methylocella silvestris (strain DSM 15510 / CIP 108128 / LMG 27833 / NCIMB 13906 / BL2) protein is Hydrogenase maturation factor HypA.